The chain runs to 671 residues: Synaptotagmin-like protein 4 (671 aa).

The region spanning L4 to Q122 is the RabBD domain. The FYVE-type zinc-finger motif lies at C63–C105. Residues S199–P243 are disordered. Residues S201, S204, S217, S221, S274, and S289 each carry the phosphoserine modification. The region spanning V356–L478 is the C2 1 domain. S488 is modified (phosphoserine). The C2 2 domain maps to P507–M633.

As to quaternary structure, part of a ternary complex containing STX1A and RAB27A. Can bind both dominant negative and dominant active mutants of RAB27A. Binds STXBP1, RAB3A, RAB8A and RAB27B. Interacts with MYO5A.

Its subcellular location is the membrane. It localises to the cell membrane. The protein localises to the cytoplasmic vesicle. The protein resides in the secretory vesicle membrane. In terms of biological role, modulates exocytosis of dense-core granules and secretion of hormones in the pancreas and the pituitary. Interacts with vesicles containing negatively charged phospholipids in a Ca(2+)-independent manner. In Homo sapiens (Human), this protein is Synaptotagmin-like protein 4 (SYTL4).